The primary structure comprises 565 residues: Periplasmic trehalase (565 aa).

The first 30 residues, 1-30 (MKSPTPSRPQKMALIPACIFLCFAALSVQA), serve as a signal peptide directing secretion. Substrate is bound by residues arginine 152, 159–160 (WD), asparagine 196, 205–207 (RSQ), 277–279 (RPE), and glycine 310. Residues aspartate 312 and glutamate 496 each act as proton donor/acceptor in the active site. A substrate-binding site is contributed by glutamate 511. Positions 539–565 (CDNVPATRPLSESTTQPLKQKEAEPTP) are disordered.

The protein belongs to the glycosyl hydrolase 37 family. In terms of assembly, monomer.

Its subcellular location is the periplasm. It carries out the reaction alpha,alpha-trehalose + H2O = alpha-D-glucose + beta-D-glucose. Functionally, provides the cells with the ability to utilize trehalose at high osmolarity by splitting it into glucose molecules that can subsequently be taken up by the phosphotransferase-mediated uptake system. The sequence is that of Periplasmic trehalase from Escherichia coli O7:K1 (strain IAI39 / ExPEC).